The chain runs to 471 residues: Putative metabolite transport protein YncC (471 aa).

12 helical membrane passes run 13–33 (LIMI…GVIN), 50–70 (VTEG…ALLC), 88–108 (FLFF…IMAV), 111–131 (FLLG…LAEM), 146–166 (LMIV…GVTM), 175–195 (YMLV…LKVP), 256–276 (LLWI…NSIM), 295–315 (IANI…IWLV), 323–343 (ILLI…IFSI), 358–378 (LTVL…WLVI), 393–413 (ISVF…PILL), and 416–436 (VGLS…IGFV).

This sequence belongs to the major facilitator superfamily. Sugar transporter (TC 2.A.1.1) family.

The protein localises to the cell membrane. The chain is Putative metabolite transport protein YncC (yncC) from Bacillus subtilis (strain 168).